Reading from the N-terminus, the 248-residue chain is Protein UL24 homolog (248 aa).

Residues 194–248 (DRPRPTAQGHRPRTHVGPKPSQLTARVPRSARAGRAGGRKGQVGAVGQVCPGAQK) form a disordered region. Low complexity predominate over residues 218 to 227 (ARVPRSARAG).

This sequence belongs to the herpesviridae UL24 family.

Its subcellular location is the virion. It localises to the host cytoplasm. The protein localises to the host nucleus. The protein resides in the host nucleolus. It is found in the host Golgi apparatus. Its function is as follows. May participate in nuclear egress of viral particles. Plays a role in the dispersal of several host nucleolar proteins including NCL/nucleolin and NPM1. Since deletion of host NCL/nucleolin negatively impact on nuclear egress, UL24 supposedly acts on this process through its effect on host nucleoli. The chain is Protein UL24 homolog from Homo sapiens (Human).